Here is a 120-residue protein sequence, read N- to C-terminus: Large ribosomal subunit protein uL22 (120 aa).

Belongs to the universal ribosomal protein uL22 family. In terms of assembly, part of the 50S ribosomal subunit.

Functionally, this protein binds specifically to 23S rRNA; its binding is stimulated by other ribosomal proteins, e.g. L4, L17, and L20. It is important during the early stages of 50S assembly. It makes multiple contacts with different domains of the 23S rRNA in the assembled 50S subunit and ribosome. Its function is as follows. The globular domain of the protein is located near the polypeptide exit tunnel on the outside of the subunit, while an extended beta-hairpin is found that lines the wall of the exit tunnel in the center of the 70S ribosome. The polypeptide is Large ribosomal subunit protein uL22 (Rippkaea orientalis (strain PCC 8801 / RF-1) (Cyanothece sp. (strain PCC 8801))).